We begin with the raw amino-acid sequence, 955 residues long: 2-oxoglutarate dehydrogenase E1 component (955 aa).

Belongs to the alpha-ketoglutarate dehydrogenase family. As to quaternary structure, homodimer. Part of the 2-oxoglutarate dehydrogenase (OGDH) complex composed of E1 (2-oxoglutarate dehydrogenase), E2 (dihydrolipoamide succinyltransferase) and E3 (dihydrolipoamide dehydrogenase); the complex contains multiple copies of the three enzymatic components (E1, E2 and E3). Thiamine diphosphate is required as a cofactor.

It catalyses the reaction N(6)-[(R)-lipoyl]-L-lysyl-[protein] + 2-oxoglutarate + H(+) = N(6)-[(R)-S(8)-succinyldihydrolipoyl]-L-lysyl-[protein] + CO2. In terms of biological role, E1 component of the 2-oxoglutarate dehydrogenase (OGDH) complex which catalyzes the decarboxylation of 2-oxoglutarate, the first step in the conversion of 2-oxoglutarate to succinyl-CoA and CO(2). The sequence is that of 2-oxoglutarate dehydrogenase E1 component from Bacillus cereus (strain ATCC 14579 / DSM 31 / CCUG 7414 / JCM 2152 / NBRC 15305 / NCIMB 9373 / NCTC 2599 / NRRL B-3711).